The primary structure comprises 174 residues: MTTIVSVRRNNQVVIAGDGQVSLGNTVMKGNAKKVRRLYHNKVLAGFAGSTADAFTLFERFEAKLEMHQGHLMRAAVEMAKDWRSDKVLRKLEALLAVADAESSLIITGNGDVVQPENDLIAIGSGGAFAQSAATALLENTDLSALEIAEKSLTIAGNICVFTNQFKTIEELKY.

The active site involves Thr-2. Gly-157, Cys-160, and Thr-163 together coordinate Na(+).

The protein belongs to the peptidase T1B family. HslV subfamily. As to quaternary structure, a double ring-shaped homohexamer of HslV is capped on each side by a ring-shaped HslU homohexamer. The assembly of the HslU/HslV complex is dependent on binding of ATP.

The protein localises to the cytoplasm. The catalysed reaction is ATP-dependent cleavage of peptide bonds with broad specificity.. Its activity is regulated as follows. Allosterically activated by HslU binding. In terms of biological role, protease subunit of a proteasome-like degradation complex believed to be a general protein degrading machinery. This Shewanella pealeana (strain ATCC 700345 / ANG-SQ1) protein is ATP-dependent protease subunit HslV.